We begin with the raw amino-acid sequence, 800 residues long: Nucleolar complex protein 3 homolog (800 aa).

Basic residues-rich tracts occupy residues 1–19 and 42–53; these read MGPA…RKLL and KKQRKEQRKLHK. Disordered regions lie at residues 1–91 and 167–197; these read MGPA…TDMM and KPVL…SAPL. The segment covering 65-74 has biased composition (basic and acidic residues); sequence PLERYKKRPE. A coiled-coil region spans residues 449–490; sequence SFKEKRKNLSRMQRKWKKAEEKLQKELLEAEATESKEKKIKL. Residues 780–800 form a disordered region; the sequence is LQEEPEQMSLDFTSPHTQQEP. A compositionally biased stretch (polar residues) spans 789 to 800; that stretch reads LDFTSPHTQQEP.

Belongs to the CBF/MAK21 family.

Its subcellular location is the nucleus. The protein localises to the nucleolus. In Danio rerio (Zebrafish), this protein is Nucleolar complex protein 3 homolog (noc3l).